Reading from the N-terminus, the 438-residue chain is DNA primase small subunit (438 aa).

Residues E63, D127, and D129 contribute to the active site. A Zinc knuckle motif motif is present at residues 139 to 149 (CCSGAGVCLKC).

Belongs to the eukaryotic-type primase small subunit family. Heterodimer of a catalytic subunit Prim1 and a regulatory subunit Prim2, also known as the DNA primase complex. Component of the alpha DNA polymerase complex (also known as the alpha DNA polymerase-primase complex) consisting of four subunits: the catalytic subunit PolA1, the regulatory subunit PolA2, and the primase complex subunits Prim1 and Prim2 respectively. PolA1 associates with the DNA primase complex before association with PolA2. Requires Mg(2+) as cofactor. Mn(2+) serves as cofactor. Expressed in embryos (at protein level).

With respect to regulation, the presence of the regulatory subunit Prim2 accelerates the kinetics of initiation and primer extension. Functionally, catalytic subunit of the DNA primase complex and component of the DNA polymerase alpha complex (also known as the alpha DNA polymerase-primase complex) which play an essential role in the initiation of DNA synthesis. During the S phase of the cell cycle, the DNA polymerase alpha complex (composed of a catalytic subunit PolA1, an accessory subunit PolA2 and two primase subunits, the catalytic subunit Prim1 and the regulatory subunit Prim2) is recruited to DNA at the replicative forks. The primase subunit of the polymerase alpha complex initiates DNA synthesis by oligomerising short RNA primers on both leading and lagging strands. These primers are initially extended by the polymerase alpha catalytic subunit and subsequently transferred to polymerase delta and polymerase epsilon for processive synthesis on the lagging and leading strand, respectively. In the primase complex, both subunits are necessary for the initial di-nucleotide formation, but the extension of the primer depends only on the catalytic subunit. Can add both ribo- and deoxynucleotides during elongation of the primers. Binds single stranded DNA. The sequence is that of DNA primase small subunit from Drosophila melanogaster (Fruit fly).